The sequence spans 89 residues: Elongation factor 1-beta (89 aa).

The protein belongs to the EF-1-beta/EF-1-delta family.

In terms of biological role, promotes the exchange of GDP for GTP in EF-1-alpha/GDP, thus allowing the regeneration of EF-1-alpha/GTP that could then be used to form the ternary complex EF-1-alpha/GTP/AAtRNA. The chain is Elongation factor 1-beta from Methanococcus maripaludis (strain C5 / ATCC BAA-1333).